The following is a 391-amino-acid chain: 3-ketoacyl-CoA thiolase (391 aa).

C95 acts as the Acyl-thioester intermediate in catalysis. Active-site proton acceptor residues include H347 and C377.

The protein belongs to the thiolase-like superfamily. Thiolase family. Heterotetramer of two alpha chains (FadB) and two beta chains (FadA).

It is found in the cytoplasm. It carries out the reaction an acyl-CoA + acetyl-CoA = a 3-oxoacyl-CoA + CoA. Its pathway is lipid metabolism; fatty acid beta-oxidation. Functionally, catalyzes the final step of fatty acid oxidation in which acetyl-CoA is released and the CoA ester of a fatty acid two carbons shorter is formed. This is 3-ketoacyl-CoA thiolase from Pseudomonas putida (Arthrobacter siderocapsulatus).